A 717-amino-acid chain; its full sequence is Epithelial splicing regulatory protein 2 (717 aa).

Residues 1–14 show a composition bias toward pro residues; sequence MTPPPPPPPPPGPD. A disordered region spans residues 1-23; sequence MTPPPPPPPPPGPDPAVDSATDP. Ser-83 bears the Phosphoserine mark. 3 consecutive RRM domains span residues 247-343, 348-428, and 465-545; these read TVVR…RFLS, VILR…RSTA, and DCVR…PCST. Ser-563 carries the phosphoserine modification.

This sequence belongs to the ESRP family. Interacts with RBPMS. In terms of tissue distribution, epithelial cell-specific.

The protein localises to the nucleus. Its function is as follows. mRNA splicing factor that regulates the formation of epithelial cell-specific isoforms. Specifically regulates the expression of FGFR2-IIIb, an epithelial cell-specific isoform of FGFR2. Also regulates the splicing of CD44, CTNND1, ENAH, 3 transcripts that undergo changes in splicing during the epithelial-to-mesenchymal transition (EMT). Acts by directly binding specific sequences in mRNAs. Binds the GU-rich sequence motifs in the ISE/ISS-3, a cis-element regulatory region present in the mRNA of FGFR2. In Mus musculus (Mouse), this protein is Epithelial splicing regulatory protein 2 (Esrp2).